A 296-amino-acid chain; its full sequence is Acetyl-coenzyme A carboxylase carboxyl transferase subunit beta (296 aa).

The CoA carboxyltransferase N-terminal domain occupies 25-294; that stretch reads VWTKCTACEQ…PFVEPELISE (270 aa). Residues Cys-29, Cys-32, Cys-48, and Cys-51 each coordinate Zn(2+). The C4-type zinc finger occupies 29 to 51; sequence CTACEQVLYSEELKRNLYVCPKC.

Belongs to the AccD/PCCB family. In terms of assembly, acetyl-CoA carboxylase is a heterohexamer composed of biotin carboxyl carrier protein (AccB), biotin carboxylase (AccC) and two subunits each of ACCase subunit alpha (AccA) and ACCase subunit beta (AccD). Zn(2+) serves as cofactor.

The protein localises to the cytoplasm. The enzyme catalyses N(6)-carboxybiotinyl-L-lysyl-[protein] + acetyl-CoA = N(6)-biotinyl-L-lysyl-[protein] + malonyl-CoA. The protein operates within lipid metabolism; malonyl-CoA biosynthesis; malonyl-CoA from acetyl-CoA: step 1/1. Component of the acetyl coenzyme A carboxylase (ACC) complex. Biotin carboxylase (BC) catalyzes the carboxylation of biotin on its carrier protein (BCCP) and then the CO(2) group is transferred by the transcarboxylase to acetyl-CoA to form malonyl-CoA. This Haemophilus influenzae (strain 86-028NP) protein is Acetyl-coenzyme A carboxylase carboxyl transferase subunit beta.